We begin with the raw amino-acid sequence, 648 residues long: Penicillin-binding protein PbpB (648 aa).

Residues Met1–Glu35 are disordered. The chain crosses the membrane as a helical span at residues Gly52 to Val72. Ser355 functions as the Acyl-ester intermediate in the catalytic mechanism.

Belongs to the transpeptidase family. In terms of assembly, interacts with Wag31.

Its subcellular location is the cell membrane. The polypeptide is Penicillin-binding protein PbpB (pbpB) (Mycolicibacterium smegmatis (strain ATCC 700084 / mc(2)155) (Mycobacterium smegmatis)).